Reading from the N-terminus, the 319-residue chain is Probable cell division protein WhiA (319 aa).

A DNA-binding region (H-T-H motif) is located at residues 277–310 (SLEELGKLAEPAMTKDAIAGRIRRLLCLADKRAK).

The protein belongs to the WhiA family.

In terms of biological role, involved in cell division and chromosome segregation. In Tropheryma whipplei (strain Twist) (Whipple's bacillus), this protein is Probable cell division protein WhiA.